The sequence spans 31 residues: Protamine PTP4 (31 aa).

The interval 1–31 (MPRRRRASRRIRRRRRPRVSRRRRGGRRRRR) is disordered.

Testis.

It is found in the nucleus. The protein resides in the chromosome. Its function is as follows. Protamines substitute for histones in the chromatin of sperm during the haploid phase of spermatogenesis. They compact sperm DNA into a highly condensed, stable and inactive complex. The chain is Protamine PTP4 from Oncorhynchus mykiss (Rainbow trout).